The following is a 210-amino-acid chain: Pyridoxine/pyridoxamine 5'-phosphate oxidase (210 aa).

Residues arginine 7–tyrosine 10 and lysine 65 contribute to the substrate site. Residues arginine 60–lysine 65, phenylalanine 75–threonine 76, arginine 81, lysine 82, and glutamine 104 contribute to the FMN site. 3 residues coordinate substrate: tyrosine 122, arginine 126, and serine 130. Residues glutamine 139–serine 140 and tryptophan 183 contribute to the FMN site. Arginine 189–histidine 191 is a substrate binding site. Arginine 193 provides a ligand contact to FMN.

The protein belongs to the pyridoxamine 5'-phosphate oxidase family. As to quaternary structure, homodimer. It depends on FMN as a cofactor.

It catalyses the reaction pyridoxamine 5'-phosphate + O2 + H2O = pyridoxal 5'-phosphate + H2O2 + NH4(+). It carries out the reaction pyridoxine 5'-phosphate + O2 = pyridoxal 5'-phosphate + H2O2. It functions in the pathway cofactor metabolism; pyridoxal 5'-phosphate salvage; pyridoxal 5'-phosphate from pyridoxamine 5'-phosphate: step 1/1. The protein operates within cofactor metabolism; pyridoxal 5'-phosphate salvage; pyridoxal 5'-phosphate from pyridoxine 5'-phosphate: step 1/1. Catalyzes the oxidation of either pyridoxine 5'-phosphate (PNP) or pyridoxamine 5'-phosphate (PMP) into pyridoxal 5'-phosphate (PLP). The chain is Pyridoxine/pyridoxamine 5'-phosphate oxidase from Actinobacillus succinogenes (strain ATCC 55618 / DSM 22257 / CCUG 43843 / 130Z).